Here is a 538-residue protein sequence, read N- to C-terminus: Cytochrome P450 monooxygenase xanG (538 aa).

The helical transmembrane segment at 44 to 64 (MILYYLASIPLAIICYLAWYL) threads the bilayer. N-linked (GlcNAc...) asparagine glycosylation is present at Asn378. Cys489 contributes to the heme binding site.

The protein belongs to the cytochrome P450 family. The cofactor is heme.

Its subcellular location is the membrane. It participates in secondary metabolite biosynthesis. In terms of biological role, cytochrome P450 monooxygenase; part of the gene cluster that mediates the biosynthesis of the isocyanide xanthocillin and its derivatives. The first step of the pathway consists in the conversion of tyrosine into a vinyl-isonitrile intermediate by the isocyanide synthase xanB. Subsequent oxidative dimerization of this intermediate to form xanthocillin may involve the cytochrome P450 monooxygenase xanG, whose expression is coregulated with that of XanB. Xanthocillin can be further modified by the isonitrile hydratase-like protein xanA which introduces N-formyl groups and the methyltransferase xanE which introduces methyl groups, leading to the production of several derivatives including fumiformamide. Finally, fumiformamide can be subject to both oxidative and reductive cyclization to yield melanocins E and F, respectively. This Aspergillus fumigatus (strain ATCC MYA-4609 / CBS 101355 / FGSC A1100 / Af293) (Neosartorya fumigata) protein is Cytochrome P450 monooxygenase xanG.